The following is a 348-amino-acid chain: Neuronal growth regulator 1 (348 aa).

The N-terminal stretch at 1-31 (MVLLAQGACCSNQWLAAVLLSLCSCLPAGQS) is a signal peptide. Ig-like C2-type domains are found at residues 32 to 128 (VDFP…VHLT), 133 to 215 (PKIY…RVVV), and 219 to 307 (PTIQ…LPLN). The cysteines at positions 54 and 112 are disulfide-linked. N-linked (GlcNAc...) asparagine glycosylation is found at Asn-67 and Asn-149. 2 cysteine pairs are disulfide-bonded: Cys-154–Cys-197 and Cys-239–Cys-291. A Phosphotyrosine modification is found at Tyr-181. Asn-269, Asn-280, Asn-288, and Asn-301 each carry an N-linked (GlcNAc...) asparagine glycan. Gly-318 carries GPI-anchor amidated glycine lipidation. A propeptide spans 319 to 348 (SACDLFSCWSLALTLSSVISIFYLKNAILQ) (removed in mature form).

This sequence belongs to the immunoglobulin superfamily. IgLON family. In terms of processing, glycosylated. Highly expressed in brain.

The protein localises to the cell membrane. In terms of biological role, may be involved in cell-adhesion. May function as a trans-neural growth-promoting factor in regenerative axon sprouting in the mammalian brain. The sequence is that of Neuronal growth regulator 1 (Negr1) from Rattus norvegicus (Rat).